We begin with the raw amino-acid sequence, 709 residues long: ATP-binding cassette sub-family F member 3 (709 aa).

Ala2 bears the N-acetylalanine mark. The residue at position 83 (Ser83) is a Phosphoserine. Over residues 129-143 (RLKAKQEKRSEKDTL) the composition is skewed to basic and acidic residues. A disordered region spans residues 129 to 171 (RLKAKQEKRSEKDTLKTSNPLVLEEASASQAGSRKESRLESSG). Phosphoserine occurs at positions 155, 157, and 161. A compositionally biased stretch (basic and acidic residues) spans 161 to 171 (SRKESRLESSG). ABC transporter domains are found at residues 178 to 424 (VRIE…LNQQ) and 492 to 707 (LQLD…RREG). Position 210-217 (210-217 (GRNGLGKT)) interacts with ATP. At Ser283 the chain carries Phosphoserine. 525-532 (GENGAGKS) contacts ATP.

Belongs to the ABC transporter superfamily. ABCF family. EF3 subfamily.

Functionally, displays an antiviral effect against flaviviruses such as west Nile virus (WNV) in the presence of OAS1B. This Homo sapiens (Human) protein is ATP-binding cassette sub-family F member 3 (ABCF3).